Here is a 194-residue protein sequence, read N- to C-terminus: Fibroblast growth factor 7 (194 aa).

The N-terminal stretch at 1 to 31 is a signal peptide; sequence MHKWILTWILPTLLYRSCFHIICLVGTISLA. N-linked (GlcNAc...) asparagine glycosylation occurs at asparagine 45.

Belongs to the heparin-binding growth factors family. In terms of assembly, interacts with FGFBP1. Interacts with FGFR2. Affinity between fibroblast growth factors (FGFs) and their receptors is increased by heparan sulfate glycosaminoglycans that function as coreceptors. As to expression, epithelial cell.

The protein localises to the secreted. In terms of biological role, plays an important role in the regulation of embryonic development, cell proliferation and cell differentiation. Required for normal branching morphogenesis. Growth factor active on keratinocytes. Possible major paracrine effector of normal epithelial cell proliferation. In Homo sapiens (Human), this protein is Fibroblast growth factor 7 (FGF7).